The sequence spans 1754 residues: MAPYPCGCHILLLLFCCLAAARANLLNLNWLWFNNEDTSHAATTIPEPQGPLPVQPTADTTTHVTPRNGSTEPATAPGSPEPPSELLEDGQDTPTSAESPDAPEENIAGVGAEILNVAKGIRSFVQLWNDTVPTESLARAETLVLETPVGPLALAGPSSTPQENGTTLWPSRGIPSSPGAHTTEAGTLPAPTPSPPSLGRPWAPLTGPSVPPPSSGRASLSSLLGGAPPWGSLQDPDSQGLSPAAAAPSQQLQRPDVRLRTPLLHPLVMGSLGKHAAPSAFSSGLPGALSQVAVTTLTRDSGAWVSHVANSVGPGLANNSALLGADPEAPAGRCLPLPPSLPVCGHLGISRFWLPNHLHHESGEQVRAGARAWGGLLQTHCHPFLAWFFCLLLVPPCGSVPPPAPPPCCQFCEALQDACWSRLGGGRLPVACASLPTQEDGYCVLIGPAAERISEEVGLLQLLGDPPPQQVTQTDDPDVGLAYVFGPDANSGQVARYHFPSLFFRDFSLLFHIRPATEGPGVLFAITDSAQAMVLLGVKLSGVQDGHQDISLLYTEPGAGQTHTAASFRLPAFVGQWTHLALSVAGGFVALYVDCEEFQRMPLARSSRGLELEPGAGLFVAQAGGADPDKFQGVIAELKVRRDPQVSPMHCLDEEGDDSDGASGDSGSGLGDARELLREETGAALKPRLPAPPPVTTPPLAGGSSTEDSRSEEVEEQTTVASLGAQTLPGSDSVSTWDGSVRTPGGRVKEGGLKGQKGEPGVPGPPGRAGPPGSPCLPGPPGLPCPVSPLGPAGPALQTVPGPQGPPGPPGRDGTPGRDGEPGDPGEDGKPGDTGPQGFPGTPGDVGPKGDKGDPGVGERGPPGPQGPPGPPGPSFRHDKLTFIDMEGSGFGGDLEALRGPRGFPGPPGPPGVPGLPGEPGRFGVNSSDVPGPAGLPGVPGREGPPGFPGLPGPPGPPGREGPPGRTGQKGSLGEAGAPGHKGSKGAPGPAGARGESGLAGAPGPAGPPGPPGPPGPPGPGLPAGFDDMEGSGGPFWSTARSADGPQGPPGLPGLKGDPGVPGLPGAKGEVGADGVPGFPGLPGREGIAGPQGPKGDRGSRGEKGDPGKDGVGQPGLPGPPGPPGPVVYVSEQDGSVLSVPGPEGRPGFAGFPGPAGPKGNLGSKGERGSPGPKGEKGEPGSIFSPDGGALGPAQKGAKGEPGFRGPPGPYGRPGYKGEIGFPGRPGRPGMNGLKGEKGEPGDASLGFGMRGMPGPPGPPGPPGPPGTPVYDSNVFAESSRPGPPGLPGNQGPPGPKGAKGEVGPPGPPGQFPFDFLQLEAEMKGEKGDRGDAGQKGERGEPGGGGFFGSSLPGPPGPPGPPGPRGYPGIPGPKGESIRGQPGPPGPQGPPGIGYEGRQGPPGPPGPPGPPSFPGPHRQTISVPGPPGPPGPPGPPGTMGASSGVRLWATRQAMLGQVHEVPEGWLIFVAEQEELYVRVQNGFRKVQLEARTPLPRGTDNEVAALQPPVVQLHDSNPYPRREHPHPTARPWRADDILASPPRLPEPQPYPGAPHHSSYVHLRPARPTSPPAHSHRDFQPVLHLVALNSPLSGGMRGIRGADFQCFQQARAVGLAGTFRAFLSSRLQDLYSIVRRADRAAVPIVNLKDELLFPSWEALFSGSEGPLKPGARIFSFDGKDVLRHPTWPQKSVWHGSDPNGRRLTESYCETWRTEAPSATGQASSLLGGRLLGQSAASCHHAYIVLCIENSFMTASK.

Residues 1-23 form the signal peptide; that stretch reads MAPYPCGCHILLLLFCCLAAARA. A disordered region spans residues 42 to 104; that stretch reads ATTIPEPQGP…TSAESPDAPE (63 aa). Polar residues predominate over residues 57–73; it reads TADTTTHVTPRNGSTEP. N-linked (GlcNAc...) asparagine glycosylation is found at asparagine 68, asparagine 129, and asparagine 164. The disordered stretch occupies residues 152–256; that stretch reads LALAGPSSTP…APSQQLQRPD (105 aa). The span at 157 to 169 shows a compositional bias: polar residues; it reads PSSTPQENGTTLW. A compositionally biased stretch (low complexity) spans 215 to 253; that stretch reads SGRASLSSLLGGAPPWGSLQDPDSQGLSPAAAAPSQQLQ. The FZ domain maps to 329–446; that stretch reads APAGRCLPLP…TQEDGYCVLI (118 aa). 5 disulfides stabilise this stretch: cysteine 334–cysteine 397, cysteine 344–cysteine 390, cysteine 381–cysteine 419, cysteine 408–cysteine 443, and cysteine 412–cysteine 432. In terms of domain architecture, Laminin G-like spans 456-644; that stretch reads EVGLLQLLGD…IAELKVRRDP (189 aa). The tract at residues 645-751 is nonhelical region 1 (NC1); it reads QVSPMHCLDE…RTPGGRVKEG (107 aa). The tract at residues 645 to 1443 is disordered; the sequence is QVSPMHCLDE…GPPGTMGASS (799 aa). Positions 672–681 are enriched in basic and acidic residues; that stretch reads DARELLREET. Threonine 696 carries the phosphothreonine modification. Positions 717–738 are enriched in polar residues; the sequence is QTTVASLGAQTLPGSDSVSTWD. The interval 752 to 785 is triple-helical region 1 (COL1); sequence GLKGQKGEPGVPGPPGRAGPPGSPCLPGPPGLPC. The span at 762 to 789 shows a compositional bias: pro residues; that stretch reads VPGPPGRAGPPGSPCLPGPPGLPCPVSP. The segment at 786–795 is nonhelical region 2 (NC2); that stretch reads PVSPLGPAGP. The segment at 796 to 875 is triple-helical region 2 (COL2); that stretch reads ALQTVPGPQG…QGPPGPPGPS (80 aa). The segment covering 815–831 has biased composition (basic and acidic residues); sequence TPGRDGEPGDPGEDGKP. Positions 833-846 are enriched in low complexity; it reads DTGPQGFPGTPGDV. Pro residues predominate over residues 862–874; sequence PPGPQGPPGPPGP. Residues 876 to 899 form a nonhelical region 3 (NC3) region; sequence FRHDKLTFIDMEGSGFGGDLEALR. An O-linked (Xyl...) (chondroitin sulfate) serine glycan is attached at serine 889. The segment at 900-1021 is triple-helical region 3 (COL3); the sequence is GPRGFPGPPG…PGPPGPPGPG (122 aa). The span at 904 to 914 shows a compositional bias: pro residues; sequence FPGPPGPPGVP. A glycan (N-linked (GlcNAc...) asparagine) is linked at asparagine 926. Residues 930-942 are compositionally biased toward low complexity; the sequence is VPGPAGLPGVPGR. A compositionally biased stretch (pro residues) spans 946 to 961; the sequence is PGFPGLPGPPGPPGRE. The span at 976-1003 shows a compositional bias: low complexity; it reads AGAPGHKGSKGAPGPAGARGESGLAGAP. Residues 1005–1021 show a composition bias toward pro residues; it reads PAGPPGPPGPPGPPGPG. The nonhelical region 4 (NC4) stretch occupies residues 1022–1044; sequence LPAGFDDMEGSGGPFWSTARSAD. The segment at 1045-1127 is triple-helical region 4 (COL4); the sequence is GPQGPPGLPG…PGPPGPPGPV (83 aa). Residues 1053 to 1065 show a composition bias toward low complexity; the sequence is PGLKGDPGVPGLP. Positions 1095-1109 are enriched in basic and acidic residues; sequence KGDRGSRGEKGDPGK. The span at 1117–1126 shows a compositional bias: pro residues; that stretch reads LPGPPGPPGP. A nonhelical region 5 (NC5) region spans residues 1128–1141; that stretch reads VYVSEQDGSVLSVP. Positions 1141 to 1153 are enriched in low complexity; sequence PGPEGRPGFAGFP. The tract at residues 1142 to 1183 is triple-helical region 5 (COL5); that stretch reads GPEGRPGFAGFPGPAGPKGNLGSKGERGSPGPKGEKGEPGSI. The interval 1184-1196 is nonhelical region 6 (NC6); that stretch reads FSPDGGALGPAQK. The segment at 1197–1269 is triple-helical region 6 (COL6); the sequence is GAKGEPGFRG…PGPPGPPGTP (73 aa). Residues 1254 to 1268 show a composition bias toward pro residues; sequence PGPPGPPGPPGPPGT. The nonhelical region 7 (NC7) stretch occupies residues 1270-1279; the sequence is VYDSNVFAES. The tract at residues 1280 to 1312 is triple-helical region 7 (COL7); sequence SRPGPPGLPGNQGPPGPKGAKGEVGPPGPPGQF. The segment covering 1282–1296 has biased composition (pro residues); the sequence is PGPPGLPGNQGPPGP. Residues 1313-1324 form a nonhelical region 8 (NC8) region; the sequence is PFDFLQLEAEMK. The span at 1321 to 1341 shows a compositional bias: basic and acidic residues; it reads AEMKGEKGDRGDAGQKGERGE. The segment at 1325-1346 is triple-helical region 8 (COL8); it reads GEKGDRGDAGQKGERGEPGGGG. The Cell attachment site motif lies at 1330–1332; it reads RGD. The segment at 1347–1353 is nonhelical region 9 (NC9); sequence FFGSSLP. Pro residues-rich tracts occupy residues 1353–1365, 1401–1414, and 1424–1436; these read PGPPGPPGPPGPR, PPGPPGPPGPPSFP, and PGPPGPPGPPGPP. The tract at residues 1354–1411 is triple-helical region 9 (COL9); that stretch reads GPPGPPGPPGPRGYPGIPGPKGESIRGQPGPPGPQGPPGIGYEGRQGPPGPPGPPGPP. The nonhelical region 10 (NC10) stretch occupies residues 1412-1424; sequence SFPGPHRQTISVP. The segment at 1425 to 1442 is triple-helical region 10 (COL10); it reads GPPGPPGPPGPPGTMGAS. A nonhelical region 11 (NC11) region spans residues 1443–1754; sequence SGVRLWATRQ…IENSFMTASK (312 aa). The interval 1456-1501 is non-collagenous domain 1 association domain; sequence GQVHEVPEGWLIFVAEQEELYVRVQNGFRKVQLEARTPLPRGTDNE. The interval 1502–1571 is non-collagenous domain 1 hinge region; that stretch reads VAALQPPVVQ…RPARPTSPPA (70 aa). A disordered region spans residues 1511 to 1556; that stretch reads QLHDSNPYPRREHPHPTARPWRADDILASPPRLPEPQPYPGAPHHS. Residues 1519-1535 show a composition bias toward basic and acidic residues; sequence PRREHPHPTARPWRADD. The segment covering 1541-1551 has biased composition (pro residues); sequence PRLPEPQPYPG. Residue threonine 1567 is glycosylated (O-linked (GalNAc...) threonine). Histidine 1572, histidine 1574, histidine 1582, and aspartate 1647 together coordinate Zn(2+). Intrachain disulfides connect cysteine 1604–cysteine 1744 and cysteine 1706–cysteine 1736.

This sequence belongs to the multiplexin collagen family. In terms of assembly, forms homotrimers. Recombinant non-collagenous domain 1 has stronger affinity to NID1, HSPG2 and laminin-1:NID1 complex and lower affinity to FBLN1 and FBLN2 than endostatin. Monomeric. Interacts with KDR/VEGFR2. Interacts with the ITGA5:ITGB1 complex. Interacts with NID1, HSPG2, laminin-1:NID1 complex, FBLN1 and FBLN2. Prolines at the third position of the tripeptide repeating unit (G-X-Y) of the triple-helical regions are hydroxylated. In terms of processing, circulating endostatins are found as sialoglycoprotein and asialoglycoprotein structures. Post-translationally, undergoes proteolytic processing by CTSL/cathepsin-L and elastase-like proteases to generate both non-collagenous domain 1 trimers and endostatin monomers. In tissue extracts (brain, skeletal muscle, heart, kidney, testis and liver) predominantly bands of approximately 38 kDa are detected; recombinant non-collagenous domain 1 shows similar mobility. In vitro, several proteolytic cleavage sites in the non-collagenous domain 1 hinge region generating different endostatin-like peptides are reported. As to expression, detected in placenta (at protein level). Present in multiple organs with highest levels in liver, lung and kidney.

The protein resides in the secreted. It localises to the extracellular space. It is found in the extracellular matrix. The protein localises to the basement membrane. Probably plays a major role in determining the retinal structure as well as in the closure of the neural tube. Its function is as follows. May regulate extracellular matrix-dependent motility and morphogenesis of endothelial and non-endothelial cells; the function requires homotrimerization and implicates MAPK signaling. Functionally, potently inhibits endothelial cell proliferation and angiogenesis. May inhibit angiogenesis by binding to the heparan sulfate proteoglycans involved in growth factor signaling. Inhibits VEGFA-induced endothelial cell proliferation and migration. Seems to inhibit VEGFA-mediated signaling by blocking the interaction of VEGFA to its receptor KDR/VEGFR2. Modulates endothelial cell migration in an integrin-dependent manner implicating integrin ITGA5:ITGB1 and to a lesser extent ITGAV:ITGB3 and ITGAV:ITGB5. May negatively regulate the activity of homotrimeric non-collagenous domain 1. The chain is Collagen alpha-1(XVIII) chain from Homo sapiens (Human).